The chain runs to 139 residues: uncharacterized protein (139 aa).

A disordered region spans residues 1–26 (MQLVREKRGAHQHVPRKTTEPQKVRG). Basic and acidic residues predominate over residues 17-26 (KTTEPQKVRG).

This is an uncharacterized protein from Ictalurid herpesvirus 1 (strain Auburn) (IcHV-1).